Here is an 87-residue protein sequence, read N- to C-terminus: Small ribosomal subunit protein bS20 (87 aa).

Positions 1–25 (MANSAQARKRARQNISHRNRNMSLR) are disordered. Over residues 7 to 20 (ARKRARQNISHRNR) the composition is skewed to basic residues.

It belongs to the bacterial ribosomal protein bS20 family.

Binds directly to 16S ribosomal RNA. The polypeptide is Small ribosomal subunit protein bS20 (Nitrosospira multiformis (strain ATCC 25196 / NCIMB 11849 / C 71)).